A 512-amino-acid polypeptide reads, in one-letter code: MALSQMATGLLLASTIFCLILWVVKAWQPRLPKGLKSPPGPWGWPLLGNVLTLGKSPHLALSRLSQRYGDVLQIRIGSTPVLVLSGLDTIRQALVRQGDDFKGRPDLYSLSLITDSQSMSFSPDSGPVWAAGRRLAQNALNTFSIASDPASSCSCYLEEHVSKEAEALLSRLQEQMAEVGRFDPYNQVLLSVANVIGAMCFGHHFSQRSEEMLPLLMSSSDFVETVSSGNPLDFFPILQYMPNSALQRFKNFNQTFVQSLQKIVQEHYQDFDERSVQDITGALLKHNEKSSRASDGHIPQEKIVNLINDIFGAGFDTVTTAISWSLMYLVANPEIQRQIQKELDTVIGRARQPRLSDRPQLPLMEAFILEIFRHTSFVPFTIPHSTTKDTTLKGFYIPKECCVFINQWQVNHDQQVWGDPFAFRPERFLTADGTTINKTLSEKVMLFGMGKRRCIGEVLAKWEIFLFLAILLQRLEFSVPAGVKVDLTPIYGLTMKHTRCEHVQARPRFSIK.

A glycan (O-linked (GlcNAc) serine) is linked at Ser65. A substrate-binding site is contributed by Phe222. Cys454 is a binding site for heme.

It belongs to the cytochrome P450 family. In terms of assembly, interacts with PGRMC1; the interaction requires PGRMC1 homodimerization. Heme is required as a cofactor. In terms of tissue distribution, constitutively expressed in liver.

It localises to the endoplasmic reticulum membrane. It is found in the microsome membrane. The catalysed reaction is an organic molecule + reduced [NADPH--hemoprotein reductase] + O2 = an alcohol + oxidized [NADPH--hemoprotein reductase] + H2O + H(+). It carries out the reaction 17beta-estradiol + reduced [NADPH--hemoprotein reductase] + O2 = 2-hydroxy-17beta-estradiol + oxidized [NADPH--hemoprotein reductase] + H2O + H(+). The enzyme catalyses 17beta-estradiol + reduced [NADPH--hemoprotein reductase] + O2 = 4-hydroxy-17beta-estradiol + oxidized [NADPH--hemoprotein reductase] + H2O + H(+). It catalyses the reaction estrone + reduced [NADPH--hemoprotein reductase] + O2 = 2-hydroxyestrone + oxidized [NADPH--hemoprotein reductase] + H2O + H(+). The catalysed reaction is estrone + reduced [NADPH--hemoprotein reductase] + O2 = 4-hydroxyestrone + oxidized [NADPH--hemoprotein reductase] + H2O + H(+). It carries out the reaction cholesterol + reduced [NADPH--hemoprotein reductase] + O2 = 25-hydroxycholesterol + oxidized [NADPH--hemoprotein reductase] + H2O + H(+). The enzyme catalyses all-trans-retinol + reduced [NADPH--hemoprotein reductase] + O2 = all-trans-retinal + oxidized [NADPH--hemoprotein reductase] + 2 H2O + H(+). It catalyses the reaction all-trans-retinal + reduced [NADPH--hemoprotein reductase] + O2 = all-trans-retinoate + oxidized [NADPH--hemoprotein reductase] + H2O + 2 H(+). The catalysed reaction is (5Z,8Z,11Z,14Z)-eicosatetraenoate + reduced [NADPH--hemoprotein reductase] + O2 = (14R,15S)-epoxy-(5Z,8Z,11Z)-eicosatrienoate + oxidized [NADPH--hemoprotein reductase] + H2O + H(+). It carries out the reaction (5Z,8Z,11Z,14Z)-eicosatetraenoate + reduced [NADPH--hemoprotein reductase] + O2 = (14S,15R)-epoxy-(5Z,8Z,11Z)-eicosatrienoate + oxidized [NADPH--hemoprotein reductase] + H2O + H(+). The enzyme catalyses (5Z,8Z,11Z,14Z,17Z)-eicosapentaenoate + reduced [NADPH--hemoprotein reductase] + O2 = (17R,18S)-epoxy-(5Z,8Z,11Z,14Z)-eicosatetraenoate + oxidized [NADPH--hemoprotein reductase] + H2O + H(+). It catalyses the reaction (4Z,7Z,10Z,13Z,16Z,19Z)-docosahexaenoate + reduced [NADPH--hemoprotein reductase] + O2 = (19R,20S)-epoxy-(4Z,7Z,10Z,13Z,16Z)-docosapentaenoate + oxidized [NADPH--hemoprotein reductase] + H2O + H(+). The catalysed reaction is (5S)-hydroperoxy-(6E,8Z,11Z,14Z)-eicosatetraenoate = 5-oxo-(6E,8Z,11Z,14Z)-eicosatetraenoate + H2O. It carries out the reaction (12S)-hydroperoxy-(5Z,8Z,10E,14Z)-eicosatetraenoate = 12-oxo-(5Z,8Z,10E,14Z)-eicosatetraenoate + H2O. The enzyme catalyses (15S)-hydroperoxy-(5Z,8Z,11Z,13E)-eicosatetraenoate = 15-oxo-(5Z,8Z,11Z,13E)-eicosatetraenoate + H2O. It catalyses the reaction (13S)-hydroperoxy-(9Z,11E)-octadecadienoate = 13-oxo-(9Z,11E)-octadecadienoate + H2O. The catalysed reaction is (5Z,8Z,11Z,14Z)-eicosatetraenoate + reduced [NADPH--hemoprotein reductase] + O2 = 13-hydroxy-(5Z,8Z,11Z,14Z)-eicosatetraenoate + oxidized [NADPH--hemoprotein reductase] + H2O + H(+). It carries out the reaction (5Z,8Z,11Z,14Z)-eicosatetraenoate + reduced [NADPH--hemoprotein reductase] + O2 = 19-hydroxy-(5Z,8Z,11Z,14Z)-eicosatetraenoate + oxidized [NADPH--hemoprotein reductase] + H2O + H(+). The enzyme catalyses (9Z,12Z)-octadecadienoate + reduced [NADPH--hemoprotein reductase] + O2 = 11-hydroxy-(9Z,12Z)-octadecadienoate + oxidized [NADPH--hemoprotein reductase] + H2O + H(+). Its pathway is cofactor metabolism; retinol metabolism. It participates in steroid metabolism; cholesterol metabolism. The protein operates within lipid metabolism; arachidonate metabolism. A cytochrome P450 monooxygenase involved in the metabolism of various endogenous substrates, including fatty acids, steroid hormones and vitamins. Mechanistically, uses molecular oxygen inserting one oxygen atom into a substrate, and reducing the second into a water molecule, with two electrons provided by NADPH via cytochrome P450 reductase (NADPH--hemoprotein reductase). Catalyzes the hydroxylation of carbon-hydrogen bonds. Exhibits high catalytic activity for the formation of hydroxyestrogens from estrone (E1) and 17beta-estradiol (E2), namely 2-hydroxy E1 and E2. Metabolizes cholesterol toward 25-hydroxycholesterol, a physiological regulator of cellular cholesterol homeostasis. May act as a major enzyme for all-trans retinoic acid biosynthesis in the liver. Catalyzes two successive oxidative transformation of all-trans retinol to all-trans retinal and then to the active form all-trans retinoic acid. Primarily catalyzes stereoselective epoxidation of the last double bond of polyunsaturated fatty acids (PUFA), displaying a strong preference for the (R,S) stereoisomer. Catalyzes bisallylic hydroxylation and omega-1 hydroxylation of PUFA. May also participate in eicosanoids metabolism by converting hydroperoxide species into oxo metabolites (lipoxygenase-like reaction, NADPH-independent). Plays a role in the oxidative metabolism of xenobiotics. Catalyzes the N-hydroxylation of heterocyclic amines and the O-deethylation of phenacetin. Metabolizes caffeine via N3-demethylation. The polypeptide is Cytochrome P450 1A2 (CYP1A2) (Canis lupus familiaris (Dog)).